Consider the following 275-residue polypeptide: 2,3,4,5-tetrahydropyridine-2,6-dicarboxylate N-succinyltransferase (275 aa).

The protein belongs to the transferase hexapeptide repeat family.

Its subcellular location is the cytoplasm. It carries out the reaction (S)-2,3,4,5-tetrahydrodipicolinate + succinyl-CoA + H2O = (S)-2-succinylamino-6-oxoheptanedioate + CoA. Its pathway is amino-acid biosynthesis; L-lysine biosynthesis via DAP pathway; LL-2,6-diaminopimelate from (S)-tetrahydrodipicolinate (succinylase route): step 1/3. This is 2,3,4,5-tetrahydropyridine-2,6-dicarboxylate N-succinyltransferase from Paraburkholderia phymatum (strain DSM 17167 / CIP 108236 / LMG 21445 / STM815) (Burkholderia phymatum).